We begin with the raw amino-acid sequence, 347 residues long: D-alanine--D-alanine ligase (347 aa).

The 199-residue stretch at 134-332 (KLYAKDLGVK…LAQSLPKTPK (199 aa)) folds into the ATP-grasp domain. 161-216 (LMNFNFPFIIKPNNAGSSLGVNVVKEEKELVYALDGAFEYSKEVLIEPFIQGVKEY) lines the ATP pocket. Mg(2+)-binding residues include Asp288, Glu300, and Asn302.

The protein belongs to the D-alanine--D-alanine ligase family. Requires Mg(2+) as cofactor. It depends on Mn(2+) as a cofactor.

Its subcellular location is the cytoplasm. It carries out the reaction 2 D-alanine + ATP = D-alanyl-D-alanine + ADP + phosphate + H(+). Its pathway is cell wall biogenesis; peptidoglycan biosynthesis. Its function is as follows. Cell wall formation. The polypeptide is D-alanine--D-alanine ligase (Helicobacter pylori (strain ATCC 700392 / 26695) (Campylobacter pylori)).